The primary structure comprises 70 residues: Ubiquinol-cytochrome c reductase complex assembly factor 5 (70 aa).

At 1–19 (MFTRAQVRRILQRVPGKQR) the chain is on the mitochondrial matrix side. The chain crosses the membrane as a helical span at residues 20–41 (FGIYRFLPFFFVLGGTMEWIMI). At 42–70 (KVRVGQETFYDVYRRKASERQYQRRLEDE) the chain is on the mitochondrial intermembrane side.

It belongs to the UQCC5 family. As to quaternary structure, associates with the mitochondrial ribosome. Interacts with UQCC6. Interacts with MT-CYB; interacts with newly synthesizes MT-CYB. Forms a complex, named COMB/coordinator of mitochondrial CYTB biogenesis, composed of UQCC1, UQCC2, UQCC4, UQCC5 and UQCC6; regulates MT-CYB synthesis and promotes its membrane insertion.

The protein resides in the mitochondrion inner membrane. Required for the assembly and stability of the mitochondrial ubiquinol-cytochrome c reductase complex (complex III (CIII) or cytochrome b-c1 complex), a multisubunit transmembrane complex that is part of the mitochondrial electron transport chain (ETC) which drives oxidative phosphorylation. Mediates early complex III biogenesis. Participates in regulating the levels of electron transport chain proteins, and therefore energy supply, in response to changes in energy demand. Also involved in the first steps of cytochrome c oxidase complex (complex IV) assembly. The protein is Ubiquinol-cytochrome c reductase complex assembly factor 5 of Homo sapiens (Human).